A 246-amino-acid polypeptide reads, in one-letter code: tRNA (guanine-N(7)-)-methyltransferase (246 aa).

Residues 1–23 (MIESSSPTPPALHEGAPADVSHP) are disordered. S-adenosyl-L-methionine-binding residues include E75, E100, D127, and D150. D150 is an active-site residue. K154 serves as a coordination point for substrate. Positions 156–161 (KHNKRR) are interaction with RNA. Substrate contacts are provided by residues D186 and 225-228 (TKFE).

This sequence belongs to the class I-like SAM-binding methyltransferase superfamily. TrmB family.

The catalysed reaction is guanosine(46) in tRNA + S-adenosyl-L-methionine = N(7)-methylguanosine(46) in tRNA + S-adenosyl-L-homocysteine. The protein operates within tRNA modification; N(7)-methylguanine-tRNA biosynthesis. In terms of biological role, catalyzes the formation of N(7)-methylguanine at position 46 (m7G46) in tRNA. The sequence is that of tRNA (guanine-N(7)-)-methyltransferase from Polaromonas naphthalenivorans (strain CJ2).